Reading from the N-terminus, the 411-residue chain is 2,3-bisphosphoglycerate-independent phosphoglycerate mutase (411 aa).

It belongs to the BPG-independent phosphoglycerate mutase family. A-PGAM subfamily.

The catalysed reaction is (2R)-2-phosphoglycerate = (2R)-3-phosphoglycerate. It participates in carbohydrate degradation; glycolysis; pyruvate from D-glyceraldehyde 3-phosphate: step 3/5. In terms of biological role, catalyzes the interconversion of 2-phosphoglycerate and 3-phosphoglycerate. The chain is 2,3-bisphosphoglycerate-independent phosphoglycerate mutase from Pyrobaculum arsenaticum (strain DSM 13514 / JCM 11321 / PZ6).